Reading from the N-terminus, the 666-residue chain is tRNA 5-methylaminomethyl-2-thiouridine biosynthesis bifunctional protein MnmC (666 aa).

The interval 1–245 (MKQYAIQPAT…KREMLCGVME (245 aa)) is tRNA (mnm(5)s(2)U34)-methyltransferase. The interval 270-666 (IGGGIASALL…RKLLKGKAVK (397 aa)) is FAD-dependent cmnm(5)s(2)U34 oxidoreductase.

It in the N-terminal section; belongs to the methyltransferase superfamily. tRNA (mnm(5)s(2)U34)-methyltransferase family. The protein in the C-terminal section; belongs to the DAO family. It depends on FAD as a cofactor.

It is found in the cytoplasm. The enzyme catalyses 5-aminomethyl-2-thiouridine(34) in tRNA + S-adenosyl-L-methionine = 5-methylaminomethyl-2-thiouridine(34) in tRNA + S-adenosyl-L-homocysteine + H(+). Catalyzes the last two steps in the biosynthesis of 5-methylaminomethyl-2-thiouridine (mnm(5)s(2)U) at the wobble position (U34) in tRNA. Catalyzes the FAD-dependent demodification of cmnm(5)s(2)U34 to nm(5)s(2)U34, followed by the transfer of a methyl group from S-adenosyl-L-methionine to nm(5)s(2)U34, to form mnm(5)s(2)U34. This chain is tRNA 5-methylaminomethyl-2-thiouridine biosynthesis bifunctional protein MnmC, found in Salmonella arizonae (strain ATCC BAA-731 / CDC346-86 / RSK2980).